Here is a 644-residue protein sequence, read N- to C-terminus: Arginine--tRNA ligase (644 aa).

The 'HIGH' region signature appears at 129–139; the sequence is ANPIHPLHLGH.

Belongs to the class-I aminoacyl-tRNA synthetase family.

Its subcellular location is the cytoplasm. It catalyses the reaction tRNA(Arg) + L-arginine + ATP = L-arginyl-tRNA(Arg) + AMP + diphosphate. The chain is Arginine--tRNA ligase (argS) from Aeropyrum pernix (strain ATCC 700893 / DSM 11879 / JCM 9820 / NBRC 100138 / K1).